A 139-amino-acid polypeptide reads, in one-letter code: Small ribosomal subunit protein uS11 (139 aa).

A disordered region spans residues 118 to 139; it reads EDVTPIPHDGTRPKGGRRGRRV.

Belongs to the universal ribosomal protein uS11 family. In terms of assembly, part of the 30S ribosomal subunit.

Functionally, located on the platform of the 30S subunit. The polypeptide is Small ribosomal subunit protein uS11 (Thermococcus sibiricus (strain DSM 12597 / MM 739)).